The chain runs to 255 residues: Taurine import ATP-binding protein TauB (255 aa).

The region spanning 2–229 (LNVSGLWAEY…RYAEGEPCRA (228 aa)) is the ABC transporter domain. An ATP-binding site is contributed by 34 to 41 (GPSGCGKT).

The protein belongs to the ABC transporter superfamily. Taurine importer (TC 3.A.1.17.1) family. In terms of assembly, the complex is composed of two ATP-binding proteins (TauB), two transmembrane proteins (TauC) and a solute-binding protein (TauA).

The protein resides in the cell inner membrane. It carries out the reaction taurine(out) + ATP + H2O = taurine(in) + ADP + phosphate + H(+). Part of the ABC transporter complex TauABC involved in taurine import. Responsible for energy coupling to the transport system. The chain is Taurine import ATP-binding protein TauB from Yersinia pestis bv. Antiqua (strain Antiqua).